Consider the following 281-residue polypeptide: Auxin-responsive protein IAA19 (281 aa).

The EAR-like (transcriptional repression) signature appears at 40-44 (LRLGL). Positions 66–126 (LGPAPPPRGG…AAGAPRAAKA (61 aa)) are disordered. Over residues 79–91 (GFVDSLDRSEGRR) the composition is skewed to basic and acidic residues. Residues 114 to 126 (GEAAAGAPRAAKA) are compositionally biased toward low complexity. In terms of domain architecture, PB1 spans 161–265 (CCYVKVSMDG…RKLRIMRGSD (105 aa)).

It belongs to the Aux/IAA family. In terms of assembly, homodimers and heterodimers. In terms of tissue distribution, expressed in etiolated seedlings and flowers.

The protein localises to the nucleus. In terms of biological role, aux/IAA proteins are short-lived transcriptional factors that function as repressors of early auxin response genes at low auxin concentrations. This Oryza sativa subsp. japonica (Rice) protein is Auxin-responsive protein IAA19 (IAA19).